The following is a 97-amino-acid chain: MAKVFTQLQYYPEAIILAQEVHYSGLKKLILEIKEKTTSPPDWNKFSGKVSINEPTTSKSKSKSTSTSTSTSTSTSTSTSTSSSTSSTSSTTSSINK.

Positions 38 to 97 are disordered; sequence TSPPDWNKFSGKVSINEPTTSKSKSKSTSTSTSTSTSTSTSTSTSSSTSSTSSTTSSINK. Low complexity predominate over residues 56-97; the sequence is TTSKSKSKSTSTSTSTSTSTSTSTSTSSSTSSTSSTTSSINK.

This is an uncharacterized protein from Dictyostelium discoideum (Social amoeba).